The chain runs to 477 residues: Glycogen synthase (477 aa).

An ADP-alpha-D-glucose-binding site is contributed by Lys15.

This sequence belongs to the glycosyltransferase 1 family. Bacterial/plant glycogen synthase subfamily.

It catalyses the reaction [(1-&gt;4)-alpha-D-glucosyl](n) + ADP-alpha-D-glucose = [(1-&gt;4)-alpha-D-glucosyl](n+1) + ADP + H(+). The protein operates within glycan biosynthesis; glycogen biosynthesis. In terms of biological role, synthesizes alpha-1,4-glucan chains using ADP-glucose. The polypeptide is Glycogen synthase (Caldicellulosiruptor saccharolyticus (strain ATCC 43494 / DSM 8903 / Tp8T 6331)).